The sequence spans 338 residues: Solute-binding protein Rfer_1840 (338 aa).

Positions 1–25 (MQRRQLLQSMGGLAASTMPFSLAFA) are cleaved as a signal peptide. Residues R47, Y100, R175, S197, 214–218 (TSSTS), and E244 contribute to the malonate site.

It belongs to the bacterial solute-binding protein 7 family. The complex is comprised of an extracytoplasmic solute-binding protein and a heteromeric permease formed by two transmembrane proteins.

It localises to the periplasm. Solute-binding protein that binds malonate (in vitro). Probably part of a tripartite ATP-independent periplasmic (TRAP) transport system that mediates solute transport into the cytoplasm. The sequence is that of Solute-binding protein Rfer_1840 from Albidiferax ferrireducens (strain ATCC BAA-621 / DSM 15236 / T118) (Rhodoferax ferrireducens).